The following is a 142-amino-acid chain: MISTARVPADKPVRIAFSLNDASDDTPPEDSIPLVFPELDQQLQPLPPCHDSEESMEVFKQHCQIAEEYHEVKKEITLLEQRKKELIAKLDQAEKEKVDAAELVREFEALTEENRTLRLAQSQCVEQLEKLRIQYQKRQGSS.

In terms of tissue distribution, detected in lung and peripheral blood leukocytes. Expressed predominantly in peripheral blood leukocytes and ubiquitously in adult and fetal tissues. Also expressed strongly in breast carcinoma GI-101, colon adenocarcinoma GI-112, and prostatic adenocarcinoma PC3.

This is MAP3K7 C-terminal-like protein (MAP3K7CL) from Homo sapiens (Human).